Here is a 136-residue protein sequence, read N- to C-terminus: Acidic phospholipase A2 CC-PLA2-2 (136 aa).

The N-terminal stretch at 1-16 (MRTLWIVAVWLMGVEG) is a signal peptide. 7 disulfides stabilise this stretch: C42–C129, C44–C60, C59–C109, C65–C136, C66–C102, C73–C95, and C90–C100. Ca(2+) is bound by residues Y43, G45, and G47. Residue H63 is part of the active site. Ca(2+) is bound at residue D64. D103 is a catalytic residue.

Belongs to the phospholipase A2 family. Group II subfamily. D49 sub-subfamily. Requires Ca(2+) as cofactor. Post-translationally, glycosylated (2.5%). As to expression, expressed by the venom gland.

The protein resides in the secreted. The catalysed reaction is a 1,2-diacyl-sn-glycero-3-phosphocholine + H2O = a 1-acyl-sn-glycero-3-phosphocholine + a fatty acid + H(+). In terms of biological role, snake venom phospholipase A2 that inhibits blood coagulation and platelet aggregation induced by ADP and arachidonic acid. Inhibits tumor cell adhesion and migration in a dose-dependent manner. Abolishes the attachment of human brain microvascular endothelial cells (HBMEC) to fibrinogen (IC(50)=0.2 uM) and dramatically reduces its adhesion to fibronectin (IC(50)=0.3 uM), whereas no effect is observed on type I collagen, vitronectin or laminin 1. Also blocks the cell migration toward fibronectin and fibrinogen. These effects are not dependent of the catalytic activity, but are mediated by alpha-5/beta-1 (ITGA5/ITGB1) and alpha-v-containing (ITGAV) integrins. Also shows anti-angiogenic activity in chicken chorioallantoix membrane assay. Has a relatively high enzymatic activity. PLA2 catalyzes the calcium-dependent hydrolysis of the 2-acyl groups in 3-sn-phosphoglycerides. The polypeptide is Acidic phospholipase A2 CC-PLA2-2 (Cerastes cerastes (Horned desert viper)).